Here is a 230-residue protein sequence, read N- to C-terminus: Ion-translocating oxidoreductase complex subunit E (230 aa).

A run of 5 helical transmembrane segments spans residues 39-59, 69-89, 93-113, 124-144, and 182-202; these read LGLGIATLLVLVGSNVTVSLV, IPVFVMIIASLVTCVQLLMNA, GLYLSLGIFIPLIVTNCIIIG, VLPAALDGFWMGLGMTSVLVV, and AFLLALLPPGAFIGVGFLIAA.

It belongs to the NqrDE/RnfAE family. The complex is composed of six subunits: RnfA, RnfB, RnfC, RnfD, RnfE and RnfG.

The protein resides in the cell inner membrane. Its function is as follows. Part of a membrane-bound complex that couples electron transfer with translocation of ions across the membrane. The protein is Ion-translocating oxidoreductase complex subunit E of Vibrio cholerae serotype O1 (strain ATCC 39315 / El Tor Inaba N16961).